Reading from the N-terminus, the 651-residue chain is Acetyl-coenzyme A synthetase (651 aa).

CoA is bound by residues 189–192, threonine 311, and asparagine 335; that span reads RGGK. Residues 387–389, 411–416, aspartate 500, and arginine 515 contribute to the ATP site; these read GEP and DTWWQT. Serine 523 is a binding site for CoA. An ATP-binding site is contributed by arginine 526. 3 residues coordinate Mg(2+): valine 537, histidine 539, and valine 542. Residue arginine 584 participates in CoA binding. The residue at position 609 (lysine 609) is an N6-acetyllysine.

Belongs to the ATP-dependent AMP-binding enzyme family. Mg(2+) serves as cofactor. Post-translationally, acetylated. Deacetylation by the SIR2-homolog deacetylase activates the enzyme.

It carries out the reaction acetate + ATP + CoA = acetyl-CoA + AMP + diphosphate. Functionally, catalyzes the conversion of acetate into acetyl-CoA (AcCoA), an essential intermediate at the junction of anabolic and catabolic pathways. AcsA undergoes a two-step reaction. In the first half reaction, AcsA combines acetate with ATP to form acetyl-adenylate (AcAMP) intermediate. In the second half reaction, it can then transfer the acetyl group from AcAMP to the sulfhydryl group of CoA, forming the product AcCoA. This chain is Acetyl-coenzyme A synthetase, found in Rhizobium etli (strain CIAT 652).